Here is a 224-residue protein sequence, read N- to C-terminus: LexA repressor (224 aa).

The segment at residues Arg-29 to Lys-49 is a DNA-binding region (H-T-H motif). Catalysis depends on for autocatalytic cleavage activity residues Ser-142 and Lys-179.

It belongs to the peptidase S24 family. In terms of assembly, homodimer.

The enzyme catalyses Hydrolysis of Ala-|-Gly bond in repressor LexA.. In terms of biological role, represses a number of genes involved in the response to DNA damage (SOS response), including recA and lexA. In the presence of single-stranded DNA, RecA interacts with LexA causing an autocatalytic cleavage which disrupts the DNA-binding part of LexA, leading to derepression of the SOS regulon and eventually DNA repair. The chain is LexA repressor from Bordetella petrii (strain ATCC BAA-461 / DSM 12804 / CCUG 43448).